Here is a 281-residue protein sequence, read N- to C-terminus: Cell growth regulator with EF hand domain protein 1 (281 aa).

The N-terminal stretch at 1–21 (MFQWLMQALMLPLLLLPLGRA) is a signal peptide. EF-hand domains lie at 71 to 106 (DREQ…ALAP) and 115 to 150 (PVIL…PKHT). Ca(2+) is bound by residues aspartate 84, aspartate 86, asparagine 88, glutamine 90, glutamate 95, aspartate 128, aspartate 130, aspartate 132, and glutamate 139. Residues 148-281 (KHTESLPPAL…HSIQLENDEI (134 aa)) form a disordered region. Polar residues predominate over residues 168 to 183 (LLANSPLQSETQQSLG). Residues 184–213 (TKEEIRGQVEAKRASLEPEQEAGHQTEGKV) are compositionally biased toward basic and acidic residues. Residues serine 217 and serine 228 each carry the phosphoserine modification. Residues 237–256 (EGAEEQVEIKDNEGEAKELL) show a composition bias toward basic and acidic residues.

In terms of processing, probably digested extracellularly by an unknown serine protease generating extremely hydrophobic bioactive peptides.

It localises to the secreted. Functionally, mediates cell-cell adhesion in a calcium-dependent manner. Able to inhibit growth in several cell lines. In Mus musculus (Mouse), this protein is Cell growth regulator with EF hand domain protein 1.